The sequence spans 457 residues: Putative transposase y4bF (457 aa).

The Integrase catalytic domain occupies 128 to 313; the sequence is TFHQPRLRRE…RPLNLAPDRL (186 aa). The tract at residues 406 to 440 is disordered; the sequence is QDERPAPKVRTNSEKNGYTPRGRKPGKRTDFMNDP.

This chain is Putative transposase y4bF, found in Sinorhizobium fredii (strain NBRC 101917 / NGR234).